Consider the following 291-residue polypeptide: BTB/POZ domain-containing protein 19 (291 aa).

Positions 29-98 constitute a BTB domain; that stretch reads SDVRFVVGQE…LYTNSAKLQR (70 aa). One can recognise a BACK domain in the interval 134 to 234; that stretch reads CEALQVAVTF…LALLAPAELS (101 aa).

In Bos taurus (Bovine), this protein is BTB/POZ domain-containing protein 19 (BTBD19).